The sequence spans 432 residues: DEAD-box ATP-dependent RNA helicase 56 (432 aa).

The stretch at 1–28 (MAEAEVKDNEVYEEDLVDYEEEVENGTD) forms a coiled coil. A Q motif motif is present at residues 51–79 (SGFRDFLLKPELLRAIQDCGFEHPSEVQH). The region spanning 82-255 (IPQAILGMDV…KKFMQDPMEI (174 aa)) is the Helicase ATP-binding domain. An ATP-binding site is contributed by 95-102 (AKSGMGKT). The DEAD box signature appears at 202–205 (DECD). One can recognise a Helicase C-terminal domain in the interval 283–428 (KLNDLLDALD…ELPEQIDTST (146 aa)).

It belongs to the DEAD box helicase family. DECD subfamily. In terms of assembly, homodimer and heterodimer with AIP2. Interacts with API5.

The protein localises to the nucleus. It carries out the reaction ATP + H2O = ADP + phosphate + H(+). ATP-binding RNA helicase involved in pre-mRNA splicing. Required for the export of mRNA out of the nucleus. Required for tapetal programmed cell death (PCD) and degeneration during anther development. Forms dimer with AIP2 and binds the promoter region of the cysteine protease CP1. Can complement the yeast RNA helicase SUB2. Plants silencing AIP1 and AIP2 are male sterile. This chain is DEAD-box ATP-dependent RNA helicase 56, found in Oryza sativa subsp. japonica (Rice).